Here is a 384-residue protein sequence, read N- to C-terminus: Organic solute transporter alpha-like protein 1 (384 aa).

Residues 1 to 38 lie on the Extracellular side of the membrane; it reads MEIVKTIIPHNRSYIEPPIPSATEWLANMSVMHVSCLT. Asn11 and Asn28 each carry an N-linked (GlcNAc...) asparagine glycan. The chain crosses the membrane as a helical span at residues 39-59; it reads IACVFVAITFLSSFFHLFFVL. At 60-70 the chain is on the cytoplasmic side; the sequence is KYVSNERIRND. A helical transmembrane segment spans residues 71-91; the sequence is MYALIFMFPITTFASLVGMFI. Topologically, residues 92 to 93 are extracellular; sequence PR. A helical transmembrane segment spans residues 94–114; the sequence is AAIFLYAVSLVYFMFTLFIMV. The Cytoplasmic segment spans residues 115-165; it reads TLLFNIFGGRQEMSAYLLQRNIRVNFTVPPLCFFKFLPTVESTDQNLRRIE. A helical membrane pass occupies residues 166–186; that stretch reads WLVFQTPIIRTLLELVSVVVS. Topologically, residues 187-202 are extracellular; it reads MEQEGRRESVWFVFSQ. A helical transmembrane segment spans residues 203–223; that stretch reads LMALLSMCIAFYGCYVMVPLG. Topologically, residues 224 to 240 are cytoplasmic; that stretch reads REKHAPYRFDFLFRTCD. A helical membrane pass occupies residues 241-261; it reads IAQCIYTIQKFVFEFAAAVGL. Residues 262-273 lie on the Extracellular side of the membrane; sequence ITSDRYLPAAAK. The chain crosses the membrane as a helical span at residues 274 to 294; it reads ALWWASFMCTWEMMLLSALCS. At 295–384 the chain is on the cytoplasmic side; that stretch reads YCLRPAKCKF…FDSLSQIQGQ (90 aa).

Belongs to the OST-alpha family.

The protein resides in the cell membrane. Functionally, probable transporter. This chain is Organic solute transporter alpha-like protein 1 (osta-1), found in Caenorhabditis elegans.